A 317-amino-acid chain; its full sequence is Zinc metalloproteinase/disintegrin (317 aa).

A propeptide spanning residues 1-26 (EAPKMCGVTQNWESYEPIKKASQSNL) is cleaved from the precursor. The 197-residue stretch at 32–228 (RYIELVIVAD…QKPQCILNKP (197 aa)) folds into the Peptidase M12B domain. The Ca(2+) site is built by glutamate 35 and aspartate 119. 3 disulfide bridges follow: cysteine 143-cysteine 223, cysteine 183-cysteine 207, and cysteine 185-cysteine 190. Histidine 168 contributes to the Zn(2+) binding site. Glutamate 169 is a catalytic residue. Positions 172 and 178 each coordinate Zn(2+). Residues cysteine 223 and asparagine 226 each contribute to the Ca(2+) site. Residues 229-244 (LRTDTVSTPVSGNELL) constitute a propeptide that is removed on maturation. The Disintegrin domain occupies 236-317 (TPVSGNELLE…AGCPRNPFHA (82 aa)). 6 disulfides stabilise this stretch: cysteine 250-cysteine 259, cysteine 252-cysteine 260, cysteine 265-cysteine 279, cysteine 273-cysteine 303, cysteine 278-cysteine 282, and cysteine 291-cysteine 310. Positions 295 to 297 (RGD) match the Cell attachment site motif.

This sequence belongs to the venom metalloproteinase (M12B) family. P-II subfamily. P-IIa sub-subfamily. Monomer. Zn(2+) is required as a cofactor. Expressed by the venom gland.

The protein resides in the secreted. Functionally, metalloproteinase that impairs hemostasis in the envenomed animal. Its function is as follows. Inhibits GPIIb/GPIIIa (ITGA2B/ITGB3) binding to immobilized fibrinogen with an IC(50) of 2.2 nM and ADP-induced platelet aggregation with an IC(50) of 131 nM, respectively. Inhibits angiogenesis. By binding to vitronectin receptor (alpha-V/beta-3 (ITGAV/ITGB3)), also induces apoptosis of endothelial cells by blocking their attachment to extracellular matrix proteins. In terms of biological role, inhibits platelet aggregation induced by ADP (IC(50) is 30 nM), collagen (IC(50) is 500 nM), thrombin and epinephrin (IC(50) is 160 nM). The polypeptide is Zinc metalloproteinase/disintegrin (Gloydius brevicauda (Korean slamosa snake)).